The following is a 388-amino-acid chain: ATP phosphoribosyltransferase regulatory subunit (388 aa).

It belongs to the class-II aminoacyl-tRNA synthetase family. HisZ subfamily. As to quaternary structure, heteromultimer composed of HisG and HisZ subunits.

The protein localises to the cytoplasm. It functions in the pathway amino-acid biosynthesis; L-histidine biosynthesis; L-histidine from 5-phospho-alpha-D-ribose 1-diphosphate: step 1/9. Required for the first step of histidine biosynthesis. May allow the feedback regulation of ATP phosphoribosyltransferase activity by histidine. This is ATP phosphoribosyltransferase regulatory subunit from Acinetobacter baumannii (strain AB307-0294).